Consider the following 266-residue polypeptide: uncharacterized protein (266 aa).

The first 22 residues, 1-22 (MRYLKKLAWFISVIILGIFIIG), serve as a signal peptide directing secretion. A lipid anchor (N-palmitoyl cysteine) is attached at Cys-23. Cys-23 is lipidated: S-diacylglycerol cysteine.

The protein belongs to the staphylococcal tandem lipoprotein family.

It localises to the cell membrane. This is an uncharacterized protein from Staphylococcus aureus (strain USA300).